The sequence spans 432 residues: Solute carrier family 35 member F5 (432 aa).

A signal peptide spans 1–33 (MFLPSTTNHSSAPLQKHLCLFCTFWALLFGSHG). A Phosphoserine modification is found at serine 116. The next 8 helical transmembrane spans lie at 152 to 172 (ISFFFCFVWFLANLSYQEALS), 177 to 197 (AIVNILSSTSGLFTLILAAVF), 205 to 225 (FTLSKLLAVILSIGGVVLVNL), 236 to 256 (TIGSIWSLAGAMLYAVYIVMI), 270 to 290 (MFFGFVGLFNLLLLWPGFFLL), 304 to 324 (VVLMCIIINGLIGTVLSEFLW), 329 to 349 (FLTSSLIGTLALSLTIPLSII), and 361 to 381 (WLFFAGAIPVFFSFFIVTLLC). One can recognise an EamA domain in the interval 161–225 (FLANLSYQEA…SIGGVVLVNL (65 aa)).

Belongs to the SLC35F solute transporter family.

The protein localises to the membrane. Functionally, putative solute transporter. The sequence is that of Solute carrier family 35 member F5 (SLC35F5) from Macaca fascicularis (Crab-eating macaque).